We begin with the raw amino-acid sequence, 272 residues long: Ribonuclease 3 (272 aa).

The tract at residues 1–22 (MSLQFLRSEASDGAGETSDASS) is disordered. An RNase III domain is found at 31–162 (TATHLARLTG…LVGAIYLDQG (132 aa)). Residue glutamate 75 participates in Mg(2+) binding. Residue aspartate 79 is part of the active site. 2 residues coordinate Mg(2+): aspartate 148 and glutamate 151. Glutamate 151 is a catalytic residue. The region spanning 189 to 258 (NYKSRLIEYT…AKEAMKRLES (70 aa)) is the DRBM domain.

It belongs to the ribonuclease III family. In terms of assembly, homodimer. The cofactor is Mg(2+).

Its subcellular location is the cytoplasm. The enzyme catalyses Endonucleolytic cleavage to 5'-phosphomonoester.. Digests double-stranded RNA. Involved in the processing of primary rRNA transcript to yield the immediate precursors to the large and small rRNAs (23S and 16S). Processes some mRNAs, and tRNAs when they are encoded in the rRNA operon. Processes pre-crRNA and tracrRNA of type II CRISPR loci if present in the organism. This Chlorobaculum tepidum (strain ATCC 49652 / DSM 12025 / NBRC 103806 / TLS) (Chlorobium tepidum) protein is Ribonuclease 3.